We begin with the raw amino-acid sequence, 741 residues long: Homeobox protein AHox1 (741 aa).

Disordered stretches follow at residues 1-30 (MEKM…KSSS), 61-96 (KRRL…NFCR), 146-183 (VNPL…KSCC), 203-226 (ADSD…INQD), 357-383 (KTEE…PIRT), 476-501 (FDFP…NPQT), and 616-642 (QYGH…GTVK). Residues 7–19 (KSVSPVPFNNSNN) show a composition bias toward low complexity. A compositionally biased stretch (basic and acidic residues) spans 63-78 (RLLDPQNKKKQNRFER). Residues 79-92 (YSSSNHAQEQSSEE) are compositionally biased toward polar residues. Positions 169-181 (SFSSSSEASDSKS) are enriched in low complexity. Polar residues predominate over residues 363–375 (RSPSETKQYSPDA). Positions 616–629 (QYGHMSSSQNPHSE) are enriched in polar residues. Over residues 630–639 (TQNRSEEVRG) the composition is skewed to basic and acidic residues. A DNA-binding region (homeobox) is located at residues 645 to 704 (RKWNRAVFSLMQRRGLEKSFQSQKYVAKPERRKLADALSLTDAQVKIWFQNRRMKWRQEI). Positions 722 to 741 (EIEKEKTQTPSDEGEVINVD) are disordered.

Belongs to the H2.0 homeobox family. Expressed in the tissues of endodermal origin.

Its subcellular location is the nucleus. This Halocynthia roretzi (Sea squirt) protein is Homeobox protein AHox1 (AHOX1).